The primary structure comprises 44 residues: Photosystem I reaction center subunit IX (44 aa).

The helical transmembrane segment at 7–27 (YLSVAPVLSTLWFGSLAGLLI) threads the bilayer.

This sequence belongs to the PsaJ family.

The protein localises to the plastid. It localises to the chloroplast thylakoid membrane. In terms of biological role, may help in the organization of the PsaE and PsaF subunits. This is Photosystem I reaction center subunit IX from Fagopyrum esculentum subsp. ancestrale (Wild buckwheat).